We begin with the raw amino-acid sequence, 454 residues long: CCA-adding enzyme (454 aa).

Residues Ser-51 and Lys-54 each coordinate ATP. 2 residues coordinate CTP: Ser-51 and Lys-54. Mg(2+) is bound by residues Asp-63, Asp-65, and Asp-118. Residues His-141, Lys-161, and Tyr-170 each coordinate ATP. Positions 141, 161, and 170 each coordinate CTP.

Belongs to the tRNA nucleotidyltransferase/poly(A) polymerase family. Archaeal CCA-adding enzyme subfamily. In terms of assembly, homodimer. It depends on Mg(2+) as a cofactor.

The enzyme catalyses a tRNA precursor + 2 CTP + ATP = a tRNA with a 3' CCA end + 3 diphosphate. It catalyses the reaction a tRNA with a 3' CCA end + 2 CTP + ATP = a tRNA with a 3' CCACCA end + 3 diphosphate. Its function is as follows. Catalyzes the addition and repair of the essential 3'-terminal CCA sequence in tRNAs without using a nucleic acid template. Adds these three nucleotides in the order of C, C, and A to the tRNA nucleotide-73, using CTP and ATP as substrates and producing inorganic pyrophosphate. tRNA 3'-terminal CCA addition is required both for tRNA processing and repair. Also involved in tRNA surveillance by mediating tandem CCA addition to generate a CCACCA at the 3' terminus of unstable tRNAs. While stable tRNAs receive only 3'-terminal CCA, unstable tRNAs are marked with CCACCA and rapidly degraded. This Methanothermobacter thermautotrophicus (strain ATCC 29096 / DSM 1053 / JCM 10044 / NBRC 100330 / Delta H) (Methanobacterium thermoautotrophicum) protein is CCA-adding enzyme.